Reading from the N-terminus, the 138-residue chain is Small ribosomal subunit protein uS11c (138 aa).

Residues 1–22 (MAKSIPRISSRRNGPIGSGKTV) form a disordered region.

The protein belongs to the universal ribosomal protein uS11 family. In terms of assembly, part of the 30S ribosomal subunit.

It is found in the plastid. This Cuscuta exaltata (Tall dodder) protein is Small ribosomal subunit protein uS11c.